Consider the following 236-residue polypeptide: UPF0177 protein YaiH (236 aa).

6 consecutive transmembrane segments (helical) span residues 16–36 (YFSL…ILGY), 51–71 (ATAT…GILI), 90–110 (ILFL…TFTY), 131–151 (IVFP…FEEA), 180–200 (TGAN…TLIY), and 210–230 (ILVH…LQTI).

Belongs to the UPF0177 family.

The protein localises to the cell membrane. This chain is UPF0177 protein YaiH (yaiH), found in Lactococcus lactis subsp. lactis (strain IL1403) (Streptococcus lactis).